The sequence spans 394 residues: Elongation factor Tu (394 aa).

Positions 10-204 (RTHINVGTIG…ILDNYIPEPK (195 aa)) constitute a tr-type G domain. Positions 19–26 (GHVDHGKT) are G1. A GTP-binding site is contributed by 19–26 (GHVDHGKT). A Mg(2+)-binding site is contributed by Thr26. Residues 60–64 (GITIN) form a G2 region. The segment at 81-84 (DCPG) is G3. Residues 81 to 85 (DCPGH) and 136 to 139 (NKCD) contribute to the GTP site. Residues 136-139 (NKCD) are G4. Positions 174 to 176 (SAL) are G5.

Belongs to the TRAFAC class translation factor GTPase superfamily. Classic translation factor GTPase family. EF-Tu/EF-1A subfamily. In terms of assembly, monomer.

Its subcellular location is the cytoplasm. It catalyses the reaction GTP + H2O = GDP + phosphate + H(+). GTP hydrolase that promotes the GTP-dependent binding of aminoacyl-tRNA to the A-site of ribosomes during protein biosynthesis. The chain is Elongation factor Tu from Blochmanniella floridana.